The sequence spans 374 residues: MAKRDYYEVLGVERGSSDAELKKAYRRLAMKHHPDRNPGDKASEDMFKEANEAYEVLSDSSKRAAYDQYGHAGVDPSMGGGGGGFGGQNFSDIFGDVFSDFFGGGRGGSRGGAQRGSDLRYTLELNLEEAVRGTTVNIRVPTLVNCKPCDGSGAKKGSSPVTCPTCGGIGQVRMQQGFFSVQQTCPRCHGQGKIISDPCDSCHGEGRVEEYKTLSVKVPAGVDTGDRIRLSGEGEAGTQGGPTGDLYVVINVREHAIFQRDGKHLFCEVPISFVDAALGGELEIPTLDGRVKLKIPEGTQTGKQFRIRGKGVAPVRGGGAGDLMCRVAVETPVNLSRRQRELLEELRGSLDDDNSHSPKTTGWFEGVKRFFGDL.

The 66-residue stretch at 5–70 (DYYEVLGVER…SKRAAYDQYG (66 aa)) folds into the J domain. The CR-type zinc-finger motif lies at 133 to 211 (GTTVNIRVPT…CHGEGRVEEY (79 aa)). 8 residues coordinate Zn(2+): cysteine 146, cysteine 149, cysteine 163, cysteine 166, cysteine 185, cysteine 188, cysteine 199, and cysteine 202. CXXCXGXG motif repeat units lie at residues 146–153 (CKPCDGSG), 163–170 (CPTCGGIG), 185–192 (CPRCHGQG), and 199–206 (CDSCHGEG).

This sequence belongs to the DnaJ family. As to quaternary structure, homodimer. Zn(2+) serves as cofactor.

The protein resides in the cytoplasm. Its function is as follows. Participates actively in the response to hyperosmotic and heat shock by preventing the aggregation of stress-denatured proteins and by disaggregating proteins, also in an autonomous, DnaK-independent fashion. Unfolded proteins bind initially to DnaJ; upon interaction with the DnaJ-bound protein, DnaK hydrolyzes its bound ATP, resulting in the formation of a stable complex. GrpE releases ADP from DnaK; ATP binding to DnaK triggers the release of the substrate protein, thus completing the reaction cycle. Several rounds of ATP-dependent interactions between DnaJ, DnaK and GrpE are required for fully efficient folding. Also involved, together with DnaK and GrpE, in the DNA replication of plasmids through activation of initiation proteins. This is Chaperone protein DnaJ from Pseudomonas fluorescens (strain ATCC BAA-477 / NRRL B-23932 / Pf-5).